The following is a 282-amino-acid chain: 4-hydroxy-3-methylbut-2-enyl diphosphate reductase (282 aa).

Cys12 serves as a coordination point for [4Fe-4S] cluster. His40 and His72 together coordinate (2E)-4-hydroxy-3-methylbut-2-enyl diphosphate. The dimethylallyl diphosphate site is built by His40 and His72. Residues His40 and His72 each contribute to the isopentenyl diphosphate site. A [4Fe-4S] cluster-binding site is contributed by Cys94. His122 lines the (2E)-4-hydroxy-3-methylbut-2-enyl diphosphate pocket. His122 is a binding site for dimethylallyl diphosphate. Position 122 (His122) interacts with isopentenyl diphosphate. Glu124 (proton donor) is an active-site residue. Thr160 serves as a coordination point for (2E)-4-hydroxy-3-methylbut-2-enyl diphosphate. A [4Fe-4S] cluster-binding site is contributed by Cys188. Residues Ser216, Asn218, and Ser260 each contribute to the (2E)-4-hydroxy-3-methylbut-2-enyl diphosphate site. Dimethylallyl diphosphate contacts are provided by Ser216, Asn218, and Ser260. 3 residues coordinate isopentenyl diphosphate: Ser216, Asn218, and Ser260.

It belongs to the IspH family. [4Fe-4S] cluster serves as cofactor.

The catalysed reaction is isopentenyl diphosphate + 2 oxidized [2Fe-2S]-[ferredoxin] + H2O = (2E)-4-hydroxy-3-methylbut-2-enyl diphosphate + 2 reduced [2Fe-2S]-[ferredoxin] + 2 H(+). It catalyses the reaction dimethylallyl diphosphate + 2 oxidized [2Fe-2S]-[ferredoxin] + H2O = (2E)-4-hydroxy-3-methylbut-2-enyl diphosphate + 2 reduced [2Fe-2S]-[ferredoxin] + 2 H(+). Its pathway is isoprenoid biosynthesis; dimethylallyl diphosphate biosynthesis; dimethylallyl diphosphate from (2E)-4-hydroxy-3-methylbutenyl diphosphate: step 1/1. It participates in isoprenoid biosynthesis; isopentenyl diphosphate biosynthesis via DXP pathway; isopentenyl diphosphate from 1-deoxy-D-xylulose 5-phosphate: step 6/6. Functionally, catalyzes the conversion of 1-hydroxy-2-methyl-2-(E)-butenyl 4-diphosphate (HMBPP) into a mixture of isopentenyl diphosphate (IPP) and dimethylallyl diphosphate (DMAPP). Acts in the terminal step of the DOXP/MEP pathway for isoprenoid precursor biosynthesis. This chain is 4-hydroxy-3-methylbut-2-enyl diphosphate reductase, found in Geotalea uraniireducens (strain Rf4) (Geobacter uraniireducens).